A 391-amino-acid polypeptide reads, in one-letter code: Calcium-binding and spermatid-specific protein 1 (391 aa).

Disordered stretches follow at residues 1 to 23 (MAED…TPTE), 90 to 110 (PEKE…GSIT), and 152 to 221 (KEVV…KEVT). Low complexity predominate over residues 90–101 (PEKEITTPTETP). A phosphoserine mark is found at serine 253 and serine 269. The segment at 271 to 299 (EKAKDNVEDPLNDEESTDGANDWMEKETA) is disordered. Over residues 278–287 (EDPLNDEEST) the composition is skewed to acidic residues. 5 positions are modified to phosphoserine: serine 314, serine 347, serine 357, serine 372, and serine 376. Residues 330–351 (EESHVNTTDLPENETTESVTNV) form a disordered region.

In terms of tissue distribution, detected only in testis. Expressed from stages X to VIII of the seminiferous epithelial cycle. Expressed from step 13 to step 16 of spermatid development (at protein level).

Its subcellular location is the cytoplasm. The protein resides in the mitochondrion inner membrane. The protein localises to the cell projection. It localises to the cilium. It is found in the flagellum. Its subcellular location is the cytoplasmic vesicle. The protein resides in the secretory vesicle. The protein localises to the acrosome. In terms of biological role, calcium-binding protein. Essential for maintaining the structural integrity of the sperm flagella. The chain is Calcium-binding and spermatid-specific protein 1 (Cabs1) from Mus musculus (Mouse).